The sequence spans 352 residues: Aromatic amino acid aminotransferase (352 aa).

At Lys217 the chain carries N6-(pyridoxal phosphate)lysine.

Belongs to the class-II pyridoxal-phosphate-dependent aminotransferase family. As to quaternary structure, homodimer. The cofactor is pyridoxal 5'-phosphate.

The catalysed reaction is an aromatic L-alpha-amino acid + 2-oxoglutarate = an aromatic oxo-acid + L-glutamate. Its function is as follows. Aminotransferase that catalyzes the conversion of aromatic amino acids and 2-oxoglutarate into corresponding aromatic oxo acids and L-glutamate. The sequence is that of Aromatic amino acid aminotransferase from Cutibacterium acnes (strain DSM 16379 / KPA171202) (Propionibacterium acnes).